Consider the following 342-residue polypeptide: tRNA N6-adenosine threonylcarbamoyltransferase (342 aa).

Residues His111 and His115 each contribute to the Fe cation site. Residues 134–138 (LVSGG), Asp167, Gly180, and Asn272 each bind substrate. Residue Asp300 participates in Fe cation binding.

It belongs to the KAE1 / TsaD family. It depends on Fe(2+) as a cofactor.

It localises to the cytoplasm. The enzyme catalyses L-threonylcarbamoyladenylate + adenosine(37) in tRNA = N(6)-L-threonylcarbamoyladenosine(37) in tRNA + AMP + H(+). Required for the formation of a threonylcarbamoyl group on adenosine at position 37 (t(6)A37) in tRNAs that read codons beginning with adenine. Is involved in the transfer of the threonylcarbamoyl moiety of threonylcarbamoyl-AMP (TC-AMP) to the N6 group of A37, together with TsaE and TsaB. TsaD likely plays a direct catalytic role in this reaction. In Aromatoleum aromaticum (strain DSM 19018 / LMG 30748 / EbN1) (Azoarcus sp. (strain EbN1)), this protein is tRNA N6-adenosine threonylcarbamoyltransferase.